We begin with the raw amino-acid sequence, 65 residues long: DNA gyrase inhibitor YacG (65 aa).

4 residues coordinate Zn(2+): C9, C12, C28, and C32. A disordered region spans residues 45-65 (KRIPSSGDLSESDDWSEEPKQ). A compositionally biased stretch (acidic residues) spans 54–65 (SESDDWSEEPKQ).

Belongs to the DNA gyrase inhibitor YacG family. As to quaternary structure, interacts with GyrB. Requires Zn(2+) as cofactor.

In terms of biological role, inhibits all the catalytic activities of DNA gyrase by preventing its interaction with DNA. Acts by binding directly to the C-terminal domain of GyrB, which probably disrupts DNA binding by the gyrase. The sequence is that of DNA gyrase inhibitor YacG from Shigella boydii serotype 18 (strain CDC 3083-94 / BS512).